The sequence spans 879 residues: MKFTKTNDLRDAYLKFFESKDHLKLESFSLVPQNDKSLLLINAGMAPLKPYFTGLQEPPKKRITTCQKCVRTGDIDNVGITSRHGTFFEMLGNFSFGDYFKKEIIPWAWEFLTGVLELPKEKLYVTIYLDDDEAYEYWTTLTDVDKTHIFRLGKEDNFWEHGAGPCGPCTEIHFSRTDEVPTNSEKFVELSDEDKIIEVWNLVFTQFDGDGKGNYEKLASTNIDTGMGLERLAVVMQNKNSIFEIDTLENILKEVGNLANVKYGEDNKIDVSLRIITDHIRSITFMISDDIMPSNEGRGYVLRRLLRRAARHGKTLGIKDAFLCNLCDVVIRDCGSAYSDLEAKKDYIKKVIKIEEDKFRETLDSGMEILNNLISELKENNEKVLKGADGFKLYDTFGFPMELTKEILEDEDLSLDEDGFHKEMKEQRERARSARKTSNYMGTDVKTLDVISGEIETTFDGYENDSLIAEVKTLVNGEDFTNSIIEGNNAVVVTDVTPFYAEMGGQIGDTGTIYNDNFKGKVLDTKKNIGGKIIHFVEAISGELKVGDKVKLEVDNARRENIKRNHTATHLLDAALVKVLGSHVHQAGSYVSADRLRFDFSHFEGVKEEELLKVEQLVNEAIMSVTPVNTTEMDLQEAKNSGAVGIFDDKYAEKVRVVCAGEYSKELCGGTHIDNTGKIGLFKIISENGIAAGTRRIEAVTGIEAYKWVNEKAELLKHISGKLKCSEKEITIKLDQQSKEIKEKEKEITNLKSKFASMEINDIINSVKDVKGINVVTYALTDVDGEALRGLCEKVRDKVNNSLTLLTSSIDGKVVICAMADKEAVSKGAHCGKVIKEAATILGGGGGGRPDMAQAGGKLPEKISDALDSVYKIVETLVK.

Positions 566, 570, 668, and 672 each coordinate Zn(2+).

The protein belongs to the class-II aminoacyl-tRNA synthetase family. Requires Zn(2+) as cofactor.

Its subcellular location is the cytoplasm. It carries out the reaction tRNA(Ala) + L-alanine + ATP = L-alanyl-tRNA(Ala) + AMP + diphosphate. Functionally, catalyzes the attachment of alanine to tRNA(Ala) in a two-step reaction: alanine is first activated by ATP to form Ala-AMP and then transferred to the acceptor end of tRNA(Ala). Also edits incorrectly charged Ser-tRNA(Ala) and Gly-tRNA(Ala) via its editing domain. This is Alanine--tRNA ligase from Clostridium botulinum (strain Alaska E43 / Type E3).